Here is a 133-residue protein sequence, read N- to C-terminus: Small ribosomal subunit protein uS11 (133 aa).

The disordered stretch occupies residues 1-22 (MPPKTRGAVRKPRKKDKKNIAL). The span at 7-17 (GAVRKPRKKDK) shows a compositional bias: basic residues.

The protein belongs to the universal ribosomal protein uS11 family. As to quaternary structure, part of the 30S ribosomal subunit. Interacts with proteins S7 and S18. Binds to IF-3.

Functionally, located on the platform of the 30S subunit, it bridges several disparate RNA helices of the 16S rRNA. Forms part of the Shine-Dalgarno cleft in the 70S ribosome. The protein is Small ribosomal subunit protein uS11 of Renibacterium salmoninarum (strain ATCC 33209 / DSM 20767 / JCM 11484 / NBRC 15589 / NCIMB 2235).